Reading from the N-terminus, the 28-residue chain is Cyclotide ltri-A (28 aa).

A cross-link (cyclopeptide (Gly-Asn)) is located at residues 1 to 28 (GVACGESCVYLPCFTVGCTCTSSQCFKN). Cystine bridges form between C4–C18, C8–C20, and C13–C25.

It belongs to the cyclotide family. Bracelet subfamily. In terms of processing, this is a cyclic peptide.

Functionally, probably participates in a plant defense mechanism. In Leonia triandra, this protein is Cyclotide ltri-A.